We begin with the raw amino-acid sequence, 222 residues long: UPF0758 protein YicR (222 aa).

An MPN domain is found at Pro100–Ile222. 3 residues coordinate Zn(2+): His171, His173, and Asp184. Positions His171–Asp184 match the JAMM motif motif.

The protein belongs to the UPF0758 family. YicR subfamily.

This is UPF0758 protein YicR from Escherichia coli O9:H4 (strain HS).